Consider the following 180-residue polypeptide: Sec-independent protein translocase protein TatB (180 aa).

A helical membrane pass occupies residues 1-21 (MFDIGWSELLVIGVVALIAIG). Residues 95 to 180 (IEGVDKPVES…AERLKDAKAS (86 aa)) are disordered. Residues 103 to 123 (ESQPAASAAPETSATVEAPAT) show a composition bias toward low complexity. A compositionally biased stretch (basic and acidic residues) spans 170-180 (EAERLKDAKAS).

Belongs to the TatB family. In terms of assembly, the Tat system comprises two distinct complexes: a TatABC complex, containing multiple copies of TatA, TatB and TatC subunits, and a separate TatA complex, containing only TatA subunits. Substrates initially bind to the TatABC complex, which probably triggers association of the separate TatA complex to form the active translocon.

It localises to the cell inner membrane. Part of the twin-arginine translocation (Tat) system that transports large folded proteins containing a characteristic twin-arginine motif in their signal peptide across membranes. Together with TatC, TatB is part of a receptor directly interacting with Tat signal peptides. TatB may form an oligomeric binding site that transiently accommodates folded Tat precursor proteins before their translocation. This is Sec-independent protein translocase protein TatB from Bradyrhizobium sp. (strain BTAi1 / ATCC BAA-1182).